The following is a 448-amino-acid chain: N-succinylarginine dihydrolase (448 aa).

Residues 19-28 (AGLSSGNIAS), N110, and 137-138 (HR) contribute to the substrate site. Residue E174 is part of the active site. R216 is a binding site for substrate. H252 is a catalytic residue. Substrate contacts are provided by D254 and N366. The active-site Nucleophile is C372.

This sequence belongs to the succinylarginine dihydrolase family. As to quaternary structure, homodimer.

The catalysed reaction is N(2)-succinyl-L-arginine + 2 H2O + 2 H(+) = N(2)-succinyl-L-ornithine + 2 NH4(+) + CO2. Its pathway is amino-acid degradation; L-arginine degradation via AST pathway; L-glutamate and succinate from L-arginine: step 2/5. Its function is as follows. Catalyzes the hydrolysis of N(2)-succinylarginine into N(2)-succinylornithine, ammonia and CO(2). The polypeptide is N-succinylarginine dihydrolase (Legionella pneumophila (strain Paris)).